The primary structure comprises 483 residues: Aspartyl/glutamyl-tRNA(Asn/Gln) amidotransferase subunit B (483 aa).

It belongs to the GatB/GatE family. GatB subfamily. Heterotrimer of A, B and C subunits.

The enzyme catalyses L-glutamyl-tRNA(Gln) + L-glutamine + ATP + H2O = L-glutaminyl-tRNA(Gln) + L-glutamate + ADP + phosphate + H(+). The catalysed reaction is L-aspartyl-tRNA(Asn) + L-glutamine + ATP + H2O = L-asparaginyl-tRNA(Asn) + L-glutamate + ADP + phosphate + 2 H(+). In terms of biological role, allows the formation of correctly charged Asn-tRNA(Asn) or Gln-tRNA(Gln) through the transamidation of misacylated Asp-tRNA(Asn) or Glu-tRNA(Gln) in organisms which lack either or both of asparaginyl-tRNA or glutaminyl-tRNA synthetases. The reaction takes place in the presence of glutamine and ATP through an activated phospho-Asp-tRNA(Asn) or phospho-Glu-tRNA(Gln). The protein is Aspartyl/glutamyl-tRNA(Asn/Gln) amidotransferase subunit B of Rickettsia canadensis (strain McKiel).